The chain runs to 322 residues: Aspartate--ammonia ligase (322 aa).

Belongs to the class-II aminoacyl-tRNA synthetase family. AsnA subfamily.

Its subcellular location is the cytoplasm. The enzyme catalyses L-aspartate + NH4(+) + ATP = L-asparagine + AMP + diphosphate + H(+). Its pathway is amino-acid biosynthesis; L-asparagine biosynthesis; L-asparagine from L-aspartate (ammonia route): step 1/1. This chain is Aspartate--ammonia ligase, found in Lactiplantibacillus plantarum (strain ATCC BAA-793 / NCIMB 8826 / WCFS1) (Lactobacillus plantarum).